Reading from the N-terminus, the 1083-residue chain is DNA primase (1083 aa).

The segment at 1022–1061 (CLRYPHRGGRTAPRTFVSLRVDHHNRLCISLAQQCFATKC) adopts a CHC2-type zinc-finger fold.

It belongs to the herpesviridae DNA primase family. As to quaternary structure, associates with the helicase and the primase-associated factor to form the helicase-primase factor.

It localises to the host nucleus. Functionally, essential component of the helicase/primase complex. Unwinds the DNA at the replication forks and generates single-stranded DNA for both leading and lagging strand synthesis. The primase initiates primer synthesis and thereby produces large amount of short RNA primers on the lagging strand that the polymerase elongates using dNTPs. The polypeptide is DNA primase (Homo sapiens (Human)).